Here is a 421-residue protein sequence, read N- to C-terminus: Gamma-glutamyl phosphate reductase (421 aa).

Belongs to the gamma-glutamyl phosphate reductase family.

It localises to the cytoplasm. It carries out the reaction L-glutamate 5-semialdehyde + phosphate + NADP(+) = L-glutamyl 5-phosphate + NADPH + H(+). The protein operates within amino-acid biosynthesis; L-proline biosynthesis; L-glutamate 5-semialdehyde from L-glutamate: step 2/2. Functionally, catalyzes the NADPH-dependent reduction of L-glutamate 5-phosphate into L-glutamate 5-semialdehyde and phosphate. The product spontaneously undergoes cyclization to form 1-pyrroline-5-carboxylate. In Pseudomonas syringae pv. tomato (strain ATCC BAA-871 / DC3000), this protein is Gamma-glutamyl phosphate reductase.